The primary structure comprises 208 residues: Flavin-dependent thymidylate synthase (208 aa).

Positions 1–208 (MEVICKHYTP…QYLFEDCLKH (208 aa)) constitute a ThyX domain. Residues Ser50 and 74-76 (RHR) each bind FAD. Residues 71-74 (ELSR), 84-86 (SSR), and Lys147 each bind dUMP. The short motif at 74–84 (RHRIASLSVKS) is the ThyX motif element. Residues 163–165 (NAR) and Asn169 contribute to the FAD site. Arg174 is a binding site for dUMP. The Involved in ionization of N3 of dUMP, leading to its activation role is filled by Arg174.

This sequence belongs to the thymidylate synthase ThyX family. In terms of assembly, homotetramer. Requires FAD as cofactor.

The catalysed reaction is dUMP + (6R)-5,10-methylene-5,6,7,8-tetrahydrofolate + NADPH + H(+) = dTMP + (6S)-5,6,7,8-tetrahydrofolate + NADP(+). Its pathway is pyrimidine metabolism; dTTP biosynthesis. Its function is as follows. Catalyzes the reductive methylation of 2'-deoxyuridine-5'-monophosphate (dUMP) to 2'-deoxythymidine-5'-monophosphate (dTMP) while utilizing 5,10-methylenetetrahydrofolate (mTHF) as the methyl donor, and NAD(P)H and FADH(2) as the reductant. This is Flavin-dependent thymidylate synthase from Helicobacter pylori (strain ATCC 700392 / 26695) (Campylobacter pylori).